A 162-amino-acid chain; its full sequence is Probable chorismate pyruvate-lyase (162 aa).

Residues arginine 54, leucine 92, and glutamate 149 each contribute to the substrate site.

Belongs to the UbiC family.

It localises to the cytoplasm. It catalyses the reaction chorismate = 4-hydroxybenzoate + pyruvate. It participates in cofactor biosynthesis; ubiquinone biosynthesis. Removes the pyruvyl group from chorismate, with concomitant aromatization of the ring, to provide 4-hydroxybenzoate (4HB) for the ubiquinone pathway. The polypeptide is Probable chorismate pyruvate-lyase (Methylococcus capsulatus (strain ATCC 33009 / NCIMB 11132 / Bath)).